The primary structure comprises 886 residues: MLKNPFNNNSLINKYQSLINQINTLEDELKTLTDSELRATSFKLKKQYAESKNLESLIPKSFALTREASLRTLGLRHFDVQLIGGLVLNDKKIAEMKTGEGKTLVATLPAYLNALTEKGVHIVTVNDYLANRDQVSMGQIYRFLGLNTGLIQDGMPNFDRRENYKADITYVTNYEVTFDFLRDNMALNLKDVVLRPFNYCIIDEVDSILIDEAQTPLIISNNIQTPIEKYIVAAEITDYLELNTHYKVDEKNKNVILTEDGSKQIEQILSVQDLYDPRDPWIPYIINALKANALYFNNVHYIVQNNRIIIVDEFTGRIMADRRWGDGLHQAIEAKEKLPIRQKTETVAAITYQNFFLLYPKLSGMTGTGKTAETEFEKIYNLSVEQIPTERPTQRKDLPDLIYKDQFSKWNAVAQNCNQIAKIGQPILVGTTTVEKSEMLAQLLSEYKLSYQILNAKPENVRRESEIVAQAGKKGSITIATNMAGRGTDIILGGNINFKIQKKLYDILTLVKNFKRSKKENIFSSSLLSQFEGSSQKFLSVLVSLSNDQKFLKLSDLDILKILRENDCISIPITSYQCSIRYLIDELITYNKKHQEQENQIVKNLGGLYIIGTERNDSRRVDNQLRGRCGRQGDPGTSRFFLSLDDNLLRLFGGSKIQNFMQTQIPDDSPLESEFITKSLDSAQERVEERAYQQRKNLFDYDDVLNKQRNIVYHERRNILESISVQKNIFAYGEQIITELLIELKEDKSCNIEATNLIENLFGRNLVLNYIKTSSLSISNLDLSELKIYLFNEFWLTYQSKITELSIYGEGIIENLERSIILINTDRIWREHLQKMTLLREAVGWRGYGQRNPLYEYKQDAFYMFETREELLRHLVIYDLLRSSIL.

ATP-binding positions include glutamine 81, 99-103, and aspartate 489; that span reads GEGKT.

This sequence belongs to the SecA family.

It is found in the plastid. The protein resides in the chloroplast stroma. It localises to the chloroplast thylakoid membrane. The catalysed reaction is ATP + H2O + cellular proteinSide 1 = ADP + phosphate + cellular proteinSide 2.. Functionally, has a central role in coupling the hydrolysis of ATP to the transfer of proteins across the thylakoid membrane. The sequence is that of Protein translocase subunit SecA from Phaeodactylum tricornutum (strain CCAP 1055/1).